Here is a 362-residue protein sequence, read N- to C-terminus: 3-isopropylmalate dehydrogenase (362 aa).

78–91 contributes to the NAD(+) binding site; that stretch reads GPKWESLPPDEQPE. Residues R99, R109, R138, and D227 each coordinate substrate. Positions 227, 251, and 255 each coordinate Mg(2+). 285–297 lines the NAD(+) pocket; that stretch reads GSAPDIAGQGIAN.

Belongs to the isocitrate and isopropylmalate dehydrogenases family. LeuB type 1 subfamily. As to quaternary structure, homodimer. The cofactor is Mg(2+). Mn(2+) is required as a cofactor.

The protein localises to the cytoplasm. The enzyme catalyses (2R,3S)-3-isopropylmalate + NAD(+) = 4-methyl-2-oxopentanoate + CO2 + NADH. It functions in the pathway amino-acid biosynthesis; L-leucine biosynthesis; L-leucine from 3-methyl-2-oxobutanoate: step 3/4. Its function is as follows. Catalyzes the oxidation of 3-carboxy-2-hydroxy-4-methylpentanoate (3-isopropylmalate) to 3-carboxy-4-methyl-2-oxopentanoate. The product decarboxylates to 4-methyl-2 oxopentanoate. The sequence is that of 3-isopropylmalate dehydrogenase from Geobacter sulfurreducens (strain ATCC 51573 / DSM 12127 / PCA).